A 335-amino-acid polypeptide reads, in one-letter code: Probable peroxidase 26 (335 aa).

A signal peptide spans 1–18 (MVMIHIFLTVMVVGGVSL). 4 disulfides stabilise this stretch: Cys46–Cys122, Cys79–Cys84, Cys128–Cys331, and Cys205–Cys237. Arg73 is an active-site residue. Residues Asp78, Val81, Gly83, Asp85, and Ser87 each coordinate Ca(2+). Pro168 is a binding site for substrate. His198 serves as a coordination point for heme b. Position 199 (Ser199) interacts with Ca(2+). Asn216 is a glycosylation site (N-linked (GlcNAc...) asparagine). 2 residues coordinate Ca(2+): Asp255 and Ser258. 2 N-linked (GlcNAc...) asparagine glycosylation sites follow: Asn259 and Asn273.

Belongs to the peroxidase family. Classical plant (class III) peroxidase subfamily. Requires heme b as cofactor. It depends on Ca(2+) as a cofactor.

The protein localises to the secreted. It catalyses the reaction 2 a phenolic donor + H2O2 = 2 a phenolic radical donor + 2 H2O. Its function is as follows. Removal of H(2)O(2), oxidation of toxic reductants, biosynthesis and degradation of lignin, suberization, auxin catabolism, response to environmental stresses such as wounding, pathogen attack and oxidative stress. The enzyme activity has to be proved. This Arabidopsis thaliana (Mouse-ear cress) protein is Probable peroxidase 26 (PER26).